The sequence spans 54 residues: Ribulose bisphosphate carboxylase large chain (54 aa).

Positions 1 to 2 (MS) are excised as a propeptide. The residue at position 3 (Pro3) is an N-acetylproline. Residue Lys14 is modified to N6,N6,N6-trimethyllysine.

This sequence belongs to the RuBisCO large chain family. Type I subfamily. Heterohexadecamer of 8 large chains and 8 small chains.

The protein localises to the plastid. It is found in the chloroplast. The enzyme catalyses 2 (2R)-3-phosphoglycerate + 2 H(+) = D-ribulose 1,5-bisphosphate + CO2 + H2O. It carries out the reaction D-ribulose 1,5-bisphosphate + O2 = 2-phosphoglycolate + (2R)-3-phosphoglycerate + 2 H(+). Its function is as follows. RuBisCO catalyzes two reactions: the carboxylation of D-ribulose 1,5-bisphosphate, the primary event in carbon dioxide fixation, as well as the oxidative fragmentation of the pentose substrate in the photorespiration process. Both reactions occur simultaneously and in competition at the same active site. In Ilex aquifolium (English holly), this protein is Ribulose bisphosphate carboxylase large chain (rbcL).